The chain runs to 189 residues: Lutzicidin (189 aa).

A signal peptide spans 1 to 22 (MQGFFWKTLLVVALCGTSSSLA). The propeptide occupies 23–155 (HRPLSYGEAL…DEEKDRPKRV (133 aa)). Disulfide bonds link Cys-79–Cys-90 and Cys-101–Cys-118. Over residues 125–148 (EEEEEDEEEQKAEVEKDEEKEDEE) the composition is skewed to acidic residues. The disordered stretch occupies residues 125–152 (EEEEEDEEEQKAEVEKDEEKEDEEKDRP).

Belongs to the cathelicidin family. As to expression, expressed by the venom gland.

The protein localises to the secreted. Its subcellular location is the target cell membrane. In terms of biological role, potent antimicrobial peptide against Gram-negative and Gram-positive bacteria. Adopts an amphipathic alpha helical conformation, that may allow to partition into the target membrane. Low hemolytic activities have been observed on mammalian cells. This Bothrops lutzi (Sertao lancehead) protein is Lutzicidin.